Consider the following 545-residue polypeptide: MFILNNRKWRKLKRDPSAFFRDSKFNFLRYFSAKKFAKNFKNSSHIHKTNISKAQSNISSTLKENRKQDMLIPINFFNFEYIVKKLNNQNAIGVYILPSNLTLKPALCILESHKEDFLNKFLLTISSENLKLQYKFNGQIKNPKSVNEIWTDLFSIAHVDMKLSTDRTLSSSISQFWFRLEFCKEDKDFILFSTANRYSRKLWKHSIKNNQLFKEGIRNYSEISSLPYEEDHNFDIDLVFTWVNSEDKNWQELYKKYKPDFNSDATSTSRFLSRDELKFALRSWEMSGSFIRKIFIVSNCAPPAWLDLNNPKIQWVYHEEIMPQSALPTFSSHAIETSLHHIPGISNYFIYSNDDFLLTKPLNKDNFFYSNGIAKLRLEAWGNVNGECTEGEPDYLNGARNANTLLEKEFKKFTTKLHTHSPQSMRTDILFEMEKKYPEEFNRTLHNKFRSLDDIAVTGYLYHHYALLSGRALQSSDKTELVQQNHDFKKKLNNVVTLTKERNFDKLPLSVCINDGADSHLNEEWNVQVIKFLETLFPLPSSFEK.

It belongs to the stealth family.

Functionally, part of a capsular biosynthesis operon and has been suggested to be the polymerase that links individual UDP-N-acetyl-D-mannosamine monomers. In serotype A the capsule is composed of repeated units of (alpha 1-6)-linked N-acetyl-D-mannosamine-1-phosphate. Non-polar disruption of this open reading frame prevented capsule synthesis. This chain is Capsular polysaccharide phosphotransferase SacB (sacB), found in Neisseria meningitidis serogroup A.